Consider the following 222-residue polypeptide: Putative cobalt transport protein CbiM (222 aa).

6 helical membrane-spanning segments follow: residues 8-28 (LPMEWAIVWYIISAIVVGYGI), 43-63 (PLLAISGAFMFVLSSLKLPSV), 75-95 (LGAILFGPAITSVLATIVLLF), 107-127 (TLGANIFSMGIMGPFVGYLVF), 134-154 (LNITWVVMLTAIFADWATYLT), and 178-198 (IFAITQIPLAIAEGLITALLW).

Belongs to the CbiM family. Forms an energy-coupling factor (ECF) transporter complex composed of an ATP-binding protein (A component, CbiO), a transmembrane protein (T component, CbiQ) and 2 possible substrate-capture proteins (S components, CbiM and CbiN) of unknown stoichimetry.

The protein localises to the cell membrane. It functions in the pathway cofactor biosynthesis; adenosylcobalamin biosynthesis. Functionally, part of the energy-coupling factor (ECF) transporter complex CbiMNOQ involved in cobalt import. The sequence is that of Putative cobalt transport protein CbiM from Methanococcus voltae (strain ATCC BAA-1334 / A3).